A 188-amino-acid chain; its full sequence is Kininogen (188 aa).

N-linked (GlcNAc...) asparagine glycans are attached at residues Asn-36, Asn-150, and Asn-182.

Post-translationally, bradykinin is released from kininogen by kallikrein. In terms of processing, N-glycosylated. Contains O-acetylated sialic acids as terminal elements on biantennary and triantennary N-glycans.

Functionally, inhibits papain and ficin (cysteine proteinases) but not trypsin (a serine proteinase). This Anarhichas minor (Arctic spotted wolffish) protein is Kininogen.